The primary structure comprises 509 residues: Maturase K (509 aa).

Belongs to the intron maturase 2 family. MatK subfamily.

The protein resides in the plastid. Its subcellular location is the chloroplast. Usually encoded in the trnK tRNA gene intron. Probably assists in splicing its own and other chloroplast group II introns. The polypeptide is Maturase K (Schlumbergera truncata (Thanksgiving cactus)).